The following is a 658-amino-acid chain: Threonine--tRNA ligase (658 aa).

The TGS domain occupies 1-61 (MSDVRVIIQR…KDGEEVEPVQ (61 aa)). The tract at residues 259–554 (DHRKLGNELD…LLEHYAGAFP (296 aa)) is catalytic. Positions 353, 404, and 531 each coordinate Zn(2+).

This sequence belongs to the class-II aminoacyl-tRNA synthetase family. As to quaternary structure, homodimer. The cofactor is Zn(2+).

The protein resides in the cytoplasm. The catalysed reaction is tRNA(Thr) + L-threonine + ATP = L-threonyl-tRNA(Thr) + AMP + diphosphate + H(+). Its function is as follows. Catalyzes the attachment of threonine to tRNA(Thr) in a two-step reaction: L-threonine is first activated by ATP to form Thr-AMP and then transferred to the acceptor end of tRNA(Thr). Also edits incorrectly charged L-seryl-tRNA(Thr). This is Threonine--tRNA ligase from Streptomyces avermitilis (strain ATCC 31267 / DSM 46492 / JCM 5070 / NBRC 14893 / NCIMB 12804 / NRRL 8165 / MA-4680).